A 343-amino-acid chain; its full sequence is Flagellar motor switch protein FliG (343 aa).

The short motif at 137-140 is the Part of the EHPQR-motif element; the sequence is EHPQ. The M-F-X-F motif; its intrinsic flexibility is probably coupled to flagellar rotation signature appears at 245–248; that stretch reads MFTF.

It belongs to the FliG family.

The protein resides in the cell inner membrane. Its subcellular location is the bacterial flagellum basal body. In terms of biological role, one of the proteins that forms a switch complex that is proposed to be located at the base of the basal body. This complex interacts with chemotaxis proteins (such as CheY) in addition to contacting components of the motor that determine the direction of flagellar rotation. Required for flagellum synthesis and motility. In H.pylori four flagellar switch proteins are encoded, FliG, FliM, FliN and FliY. This Helicobacter pylori (strain ATCC 700392 / 26695) (Campylobacter pylori) protein is Flagellar motor switch protein FliG.